We begin with the raw amino-acid sequence, 467 residues long: Acid phosphatase PHO12 (467 aa).

The signal sequence occupies residues 1–17 (MLKSAVYSILAASLVNA). The Nucleophile role is filled by His75. 5 N-linked (GlcNAc...) asparagine glycosylation sites follow: Asn97, Asn162, Asn192, Asn250, and Asn315. Asp338 functions as the Proton donor in the catalytic mechanism. 5 N-linked (GlcNAc...) asparagine glycosylation sites follow: Asn356, Asn390, Asn439, Asn445, and Asn461.

The protein belongs to the histidine acid phosphatase family. Glycosylated during secretion across the membrane.

It carries out the reaction a phosphate monoester + H2O = an alcohol + phosphate. This chain is Acid phosphatase PHO12 (PHO12), found in Saccharomyces cerevisiae (strain ATCC 204508 / S288c) (Baker's yeast).